A 133-amino-acid chain; its full sequence is Small ribosomal subunit protein uS8 (133 aa).

The protein belongs to the universal ribosomal protein uS8 family. Part of the 30S ribosomal subunit. Contacts proteins S5 and S12.

Functionally, one of the primary rRNA binding proteins, it binds directly to 16S rRNA central domain where it helps coordinate assembly of the platform of the 30S subunit. The sequence is that of Small ribosomal subunit protein uS8 from Lachnoclostridium phytofermentans (strain ATCC 700394 / DSM 18823 / ISDg) (Clostridium phytofermentans).